A 431-amino-acid polypeptide reads, in one-letter code: tRNA(Ile)-lysidine synthase (431 aa).

25-30 provides a ligand contact to ATP; the sequence is SGGLDS.

It belongs to the tRNA(Ile)-lysidine synthase family.

The protein resides in the cytoplasm. The enzyme catalyses cytidine(34) in tRNA(Ile2) + L-lysine + ATP = lysidine(34) in tRNA(Ile2) + AMP + diphosphate + H(+). Ligates lysine onto the cytidine present at position 34 of the AUA codon-specific tRNA(Ile) that contains the anticodon CAU, in an ATP-dependent manner. Cytidine is converted to lysidine, thus changing the amino acid specificity of the tRNA from methionine to isoleucine. The polypeptide is tRNA(Ile)-lysidine synthase (Legionella pneumophila (strain Lens)).